A 641-amino-acid chain; its full sequence is 1-deoxy-D-xylulose-5-phosphate synthase (641 aa).

Thiamine diphosphate-binding positions include His79 and 120-122 (AHS). Asp151 lines the Mg(2+) pocket. Residues 152 to 153 (GA), Asn180, Tyr290, and Glu372 contribute to the thiamine diphosphate site. Asn180 serves as a coordination point for Mg(2+).

Belongs to the transketolase family. DXPS subfamily. As to quaternary structure, homodimer. It depends on Mg(2+) as a cofactor. Requires thiamine diphosphate as cofactor.

It carries out the reaction D-glyceraldehyde 3-phosphate + pyruvate + H(+) = 1-deoxy-D-xylulose 5-phosphate + CO2. It participates in metabolic intermediate biosynthesis; 1-deoxy-D-xylulose 5-phosphate biosynthesis; 1-deoxy-D-xylulose 5-phosphate from D-glyceraldehyde 3-phosphate and pyruvate: step 1/1. Its function is as follows. Catalyzes the acyloin condensation reaction between C atoms 2 and 3 of pyruvate and glyceraldehyde 3-phosphate to yield 1-deoxy-D-xylulose-5-phosphate (DXP). This Bradyrhizobium sp. (strain BTAi1 / ATCC BAA-1182) protein is 1-deoxy-D-xylulose-5-phosphate synthase.